The sequence spans 116 residues: Large ribosomal subunit protein bL17 (116 aa).

Belongs to the bacterial ribosomal protein bL17 family. As to quaternary structure, part of the 50S ribosomal subunit. Contacts protein L32.

The protein is Large ribosomal subunit protein bL17 of Rippkaea orientalis (strain PCC 8801 / RF-1) (Cyanothece sp. (strain PCC 8801)).